A 398-amino-acid polypeptide reads, in one-letter code: Acetate kinase (398 aa).

N8 lines the Mg(2+) pocket. K15 lines the ATP pocket. R89 is a binding site for substrate. The active-site Proton donor/acceptor is the D146. Residues 206–210, 283–285, and 331–335 contribute to the ATP site; these read HIGNG, DMR, and GMGEN. A Mg(2+)-binding site is contributed by E383.

This sequence belongs to the acetokinase family. Homodimer. It depends on Mg(2+) as a cofactor. Mn(2+) serves as cofactor.

Its subcellular location is the cytoplasm. It catalyses the reaction acetate + ATP = acetyl phosphate + ADP. Its pathway is metabolic intermediate biosynthesis; acetyl-CoA biosynthesis; acetyl-CoA from acetate: step 1/2. Functionally, catalyzes the formation of acetyl phosphate from acetate and ATP. Can also catalyze the reverse reaction. This chain is Acetate kinase, found in Streptococcus pyogenes serotype M2 (strain MGAS10270).